The primary structure comprises 359 residues: Peptide chain release factor 1 (359 aa).

Gln-235 bears the N5-methylglutamine mark. Residues 283 to 309 form a disordered region; sequence QKAESERSQARRSQVGSGDRSERIRTY.

This sequence belongs to the prokaryotic/mitochondrial release factor family. Post-translationally, methylated by PrmC. Methylation increases the termination efficiency of RF1.

It localises to the cytoplasm. Its function is as follows. Peptide chain release factor 1 directs the termination of translation in response to the peptide chain termination codons UAG and UAA. This Brucella canis (strain ATCC 23365 / NCTC 10854 / RM-666) protein is Peptide chain release factor 1.